Here is a 115-residue protein sequence, read N- to C-terminus: U3-lycotoxin-Ls1k (115 aa).

Residues 1-20 (MKFVLLFGVLLVALFSYSSA) form the signal peptide. Positions 21 to 44 (EMLDDFGQADEDELLSLIEKEEAR) are excised as a propeptide. Disulfide bonds link C48/C63, C55/C72, C62/C87, and C74/C85.

The protein belongs to the neurotoxin 19 (CSTX) family. 01 subfamily. As to expression, expressed by the venom gland.

The protein localises to the secreted. This Lycosa singoriensis (Wolf spider) protein is U3-lycotoxin-Ls1k.